The following is a 70-amino-acid chain: Small ribosomal subunit protein bS21 (70 aa).

The segment at 40–70 (KPTAERKRKHAAAVKRHYKRIRSQQLPPRLY) is disordered. The segment covering 45 to 61 (RKRKHAAAVKRHYKRIR) has biased composition (basic residues).

This sequence belongs to the bacterial ribosomal protein bS21 family.

The protein is Small ribosomal subunit protein bS21 of Bordetella parapertussis (strain 12822 / ATCC BAA-587 / NCTC 13253).